Consider the following 431-residue polypeptide: Serine hydroxymethyltransferase 2 (431 aa).

Residues Leu131 and 135–137 (GHL) each bind (6S)-5,6,7,8-tetrahydrofolate. Lys240 is modified (N6-(pyridoxal phosphate)lysine).

The protein belongs to the SHMT family. Homodimer. The cofactor is pyridoxal 5'-phosphate.

The protein resides in the cytoplasm. The enzyme catalyses (6R)-5,10-methylene-5,6,7,8-tetrahydrofolate + glycine + H2O = (6S)-5,6,7,8-tetrahydrofolate + L-serine. It functions in the pathway one-carbon metabolism; tetrahydrofolate interconversion. Its pathway is amino-acid biosynthesis; glycine biosynthesis; glycine from L-serine: step 1/1. Functionally, catalyzes the reversible interconversion of serine and glycine with tetrahydrofolate (THF) serving as the one-carbon carrier. This reaction serves as the major source of one-carbon groups required for the biosynthesis of purines, thymidylate, methionine, and other important biomolecules. Also exhibits THF-independent aldolase activity toward beta-hydroxyamino acids, producing glycine and aldehydes, via a retro-aldol mechanism. In Photobacterium profundum (strain SS9), this protein is Serine hydroxymethyltransferase 2.